A 268-amino-acid polypeptide reads, in one-letter code: GTP cyclohydrolase 1 type 2 homolog (268 aa).

5 residues coordinate a divalent metal cation: His-66, His-67, Asp-105, His-227, and Glu-231.

It belongs to the GTP cyclohydrolase I type 2/NIF3 family. In terms of assembly, homohexamer.

This chain is GTP cyclohydrolase 1 type 2 homolog, found in Clostridium acetobutylicum (strain ATCC 824 / DSM 792 / JCM 1419 / IAM 19013 / LMG 5710 / NBRC 13948 / NRRL B-527 / VKM B-1787 / 2291 / W).